The following is a 697-amino-acid chain: Elongation factor G (697 aa).

Residues 8–283 enclose the tr-type G domain; that stretch reads EHIRNIGICA…AVVDFLPSPT (276 aa). GTP contacts are provided by residues 17–24, 81–85, and 135–138; these read AHIDAGKT, DTPGH, and NKMD.

The protein belongs to the TRAFAC class translation factor GTPase superfamily. Classic translation factor GTPase family. EF-G/EF-2 subfamily.

It is found in the cytoplasm. In terms of biological role, catalyzes the GTP-dependent ribosomal translocation step during translation elongation. During this step, the ribosome changes from the pre-translocational (PRE) to the post-translocational (POST) state as the newly formed A-site-bound peptidyl-tRNA and P-site-bound deacylated tRNA move to the P and E sites, respectively. Catalyzes the coordinated movement of the two tRNA molecules, the mRNA and conformational changes in the ribosome. This is Elongation factor G from Rickettsia rhipicephali.